A 367-amino-acid chain; its full sequence is Quinolinate synthase (367 aa).

Residues H64 and S82 each contribute to the iminosuccinate site. C127 contributes to the [4Fe-4S] cluster binding site. Residues 153–155 (YVN) and S170 contribute to the iminosuccinate site. C216 is a [4Fe-4S] cluster binding site. Iminosuccinate-binding positions include 242 to 244 (HPE) and T259. C302 lines the [4Fe-4S] cluster pocket.

Belongs to the quinolinate synthase family. Type 2 subfamily. [4Fe-4S] cluster is required as a cofactor.

It is found in the cytoplasm. It catalyses the reaction iminosuccinate + dihydroxyacetone phosphate = quinolinate + phosphate + 2 H2O + H(+). Its pathway is cofactor biosynthesis; NAD(+) biosynthesis; quinolinate from iminoaspartate: step 1/1. Its function is as follows. Catalyzes the condensation of iminoaspartate with dihydroxyacetone phosphate to form quinolinate. The polypeptide is Quinolinate synthase (Caulobacter vibrioides (strain ATCC 19089 / CIP 103742 / CB 15) (Caulobacter crescentus)).